Reading from the N-terminus, the 187-residue chain is Large ribosomal subunit protein uL6 (187 aa).

A disordered region spans residues 159–187 (PYKGKGIRYKGEQLSSNPERLQVRSKEVR).

The protein belongs to the universal ribosomal protein uL6 family. In terms of assembly, part of the 50S ribosomal subunit.

In terms of biological role, this protein binds to the 23S rRNA, and is important in its secondary structure. It is located near the subunit interface in the base of the L7/L12 stalk, and near the tRNA binding site of the peptidyltransferase center. The polypeptide is Large ribosomal subunit protein uL6 (Aquifex pyrophilus).